The following is a 300-amino-acid chain: UPF0282 protein TGAM_0379 (300 aa).

It belongs to the UPF0282 family.

In Thermococcus gammatolerans (strain DSM 15229 / JCM 11827 / EJ3), this protein is UPF0282 protein TGAM_0379.